The chain runs to 483 residues: MLTLDTLNVMLAVSEEGLIEEMIIALLASPQLAVFFEKFPRLKAAITDDVPRWREALRSRLKDARVPPELTEEVMCYQQSQLLSTPQFIVQLPQILDLLHRLNSPWAEQARQLVDANSTITSALHTLFLQRWRLSLIVQATTLNQQLLEEEREQLLSEVQERMTLSGQLEPILADNNTAAGRLWDMSAGQLKRGDYQLIVKYGEFLNEQPELKRLAEQLGRSREAKSIPRNDAQMEAFRTMVCEPATVPEQVDGLQQSDDILRLLPPELATLGITELEYEFYRRLVEKQLLTYRLHGESWREKVIERPVVHKDYDEQPRGPFIVCVDTSGSMGGFNEQCAKAFCLALMRIALAENRRCYIMLFSTEIVRYELSGPQGIEQAIRFLSQQFRGGTDLASCFRAIMERLQSREWFDADAVVISDFIAQRLPDDVTSKVKELQRVHQHRFHAVAMSAHGKPGIMRIFDHIWRFDTGMRSRLLRRWRR.

It belongs to the ViaA family. As to quaternary structure, homodimer. Interacts with RavA.

The protein resides in the cytoplasm. Component of the RavA-ViaA chaperone complex, which may act on the membrane to optimize the function of some of the respiratory chains. ViaA stimulates the ATPase activity of RavA. The polypeptide is Regulatory protein ViaA (Escherichia coli (strain 55989 / EAEC)).